The primary structure comprises 239 residues: MTLTRKTLFLLTAAFGTHSLQTASADAVVKAEKLHASANRSYKVAGKRYTPKNQVAEFTQTGNASWYGGRFHGRKTSGGERYDMNAFTAAHKTLPIPSYVRVTNTKNGKSVIVRVNDRGPFHGNRIIDVSKAAAQKLGFVNQGTAHVKIEQIVPGQSAPVAENKDIFIDLKSFGTEHEAQAYLNQAAQNFAVSSSGTNLSVEKRRYEYVVKMGPFTSQERAAEAEAQARGMVRAVLTAG.

Residues 1–25 form the signal peptide; the sequence is MTLTRKTLFLLTAAFGTHSLQTASA. Positions 160–239 constitute an SPOR domain; the sequence is VAENKDIFID…GMVRAVLTAG (80 aa).

It belongs to the RlpA family.

Lytic transglycosylase with a strong preference for naked glycan strands that lack stem peptides. This is Endolytic peptidoglycan transglycosylase RlpA from Neisseria meningitidis serogroup B (strain ATCC BAA-335 / MC58).